Consider the following 329-residue polypeptide: Putative GTPase Obg (329 aa).

The 159-residue stretch at 1–159 (MQFIDQARIM…WPLQLELKLL (159 aa)) folds into the Obg domain. An OBG-type G domain is found at 160-328 (AEVGIIGLPN…LKTQIWQQLG (169 aa)). GTP is bound by residues 166 to 173 (GLPNAGKS), 191 to 195 (FTTLI), 213 to 216 (DIPG), 280 to 283 (SKIE), and 309 to 311 (SSA). Ser-173 and Thr-193 together coordinate Mg(2+).

It belongs to the TRAFAC class OBG-HflX-like GTPase superfamily. OBG GTPase family. In terms of assembly, monomer. The cofactor is Mg(2+).

It is found in the plastid. The protein resides in the organellar chromatophore. In terms of biological role, an essential GTPase which binds GTP, GDP and possibly (p)ppGpp with moderate affinity, with high nucleotide exchange rates and a fairly low GTP hydrolysis rate. This is Putative GTPase Obg from Paulinella chromatophora.